Consider the following 73-residue polypeptide: UPF0154 protein MYCGA5700 (73 aa).

A helical membrane pass occupies residues 5 to 25 (LALGLSIPLCLIVGAFVGYFV).

Belongs to the UPF0154 family.

It is found in the membrane. This Mycoplasmoides gallisepticum (strain R(low / passage 15 / clone 2)) (Mycoplasma gallisepticum) protein is UPF0154 protein MYCGA5700.